The primary structure comprises 542 residues: Putative inactive cadmium/zinc-transporting ATPase HMA3 (542 aa).

At 1–89 (MAEGEESKKM…VRPYGETSLK (89 aa)) the chain is on the cytoplasmic side. The 67-residue stretch at 13–79 (QTSYFDVVGI…ALNQARLEAS (67 aa)) folds into the HMA domain. A helical membrane pass occupies residues 90 to 111 (SQWPSPFAIVSGVLLVLSFFKY). Residues 112-114 (FYS) lie on the Extracellular side of the membrane. A helical transmembrane segment spans residues 115 to 134 (PLEWLAIVAVVAGVFPILAK). The Cytoplasmic portion of the chain corresponds to 135–141 (AVASVTR). The helical transmembrane segment at 142–162 (FRLDINALTLIAVIATLCMQD) threads the bilayer. Phe-163 is a topological domain (extracellular). The helical transmembrane segment at 164-184 (TEAATIVFLFSVADWLESSAA) threads the bilayer. Residues 185–310 (HKASIVMSSL…QTKTQRFIDK (126 aa)) lie on the Cytoplasmic side of the membrane. The chain crosses the membrane as a helical span at residues 311 to 333 (CSRYYTPAVVVSAACFAVIPVLL). Residues 334 to 341 (KVQDLSHW) lie on the Extracellular side of the membrane. The helical transmembrane segment at 342-359 (FHLALVVLVSGCPCGLIL) threads the bilayer. Topologically, residues 360–542 (STPVATFCAL…VAQALKELKS (183 aa)) are cytoplasmic.

Belongs to the cation transport ATPase (P-type) (TC 3.A.3) family. Type IB subfamily.

The protein localises to the membrane. The protein is Putative inactive cadmium/zinc-transporting ATPase HMA3 (HMA3) of Arabidopsis thaliana (Mouse-ear cress).